Consider the following 131-residue polypeptide: Small ribosomal subunit protein uS11 (131 aa).

It belongs to the universal ribosomal protein uS11 family. As to quaternary structure, part of the 30S ribosomal subunit.

In terms of biological role, located on the platform of the 30S subunit. This Haloquadratum walsbyi (strain DSM 16790 / HBSQ001) protein is Small ribosomal subunit protein uS11.